Here is a 116-residue protein sequence, read N- to C-terminus: Large ribosomal subunit protein bL19 (116 aa).

The protein belongs to the bacterial ribosomal protein bL19 family.

Functionally, this protein is located at the 30S-50S ribosomal subunit interface and may play a role in the structure and function of the aminoacyl-tRNA binding site. The chain is Large ribosomal subunit protein bL19 from Pseudomonas aeruginosa (strain LESB58).